Consider the following 315-residue polypeptide: Methionyl-tRNA formyltransferase (315 aa).

113–116 (SLLP) lines the (6S)-5,6,7,8-tetrahydrofolate pocket.

The protein belongs to the Fmt family.

The enzyme catalyses L-methionyl-tRNA(fMet) + (6R)-10-formyltetrahydrofolate = N-formyl-L-methionyl-tRNA(fMet) + (6S)-5,6,7,8-tetrahydrofolate + H(+). Functionally, attaches a formyl group to the free amino group of methionyl-tRNA(fMet). The formyl group appears to play a dual role in the initiator identity of N-formylmethionyl-tRNA by promoting its recognition by IF2 and preventing the misappropriation of this tRNA by the elongation apparatus. This is Methionyl-tRNA formyltransferase from Shigella dysenteriae serotype 1 (strain Sd197).